The primary structure comprises 401 residues: tRNA pseudouridine synthase Pus10 (401 aa).

Residues 64 to 195 (ALAKSGHRES…DGSVSVEVMP (132 aa)) form the THUMP domain.

This sequence belongs to the pseudouridine synthase Pus10 family.

The catalysed reaction is uridine(54) in tRNA = pseudouridine(54) in tRNA. The enzyme catalyses uridine(55) in tRNA = pseudouridine(55) in tRNA. Its function is as follows. Responsible for synthesis of pseudouridine from uracil-54 and uracil-55 in the psi GC loop of transfer RNAs. This Caldivirga maquilingensis (strain ATCC 700844 / DSM 13496 / JCM 10307 / IC-167) protein is tRNA pseudouridine synthase Pus10.